The following is a 667-amino-acid chain: UvrABC system protein B (667 aa).

The 384-residue stretch at 31–414 (AGIESGEKEQ…EMDRTKHVVQ (384 aa)) folds into the Helicase ATP-binding domain. An ATP-binding site is contributed by 44–51 (GATGTGKT). Positions 97–120 (YYDYYQPEAYVPSSDTYIEKDSAI) match the Beta-hairpin motif. Positions 435-597 (QIDDLVGEIN…ITPHTIKKAI (163 aa)) constitute a Helicase C-terminal domain. The 36-residue stretch at 630-665 (LDMISKLEEQMKTAAKKLDFEQAATLRDTVMELKAQ) folds into the UVR domain.

This sequence belongs to the UvrB family. In terms of assembly, forms a heterotetramer with UvrA during the search for lesions. Interacts with UvrC in an incision complex.

It localises to the cytoplasm. Its function is as follows. The UvrABC repair system catalyzes the recognition and processing of DNA lesions. A damage recognition complex composed of 2 UvrA and 2 UvrB subunits scans DNA for abnormalities. Upon binding of the UvrA(2)B(2) complex to a putative damaged site, the DNA wraps around one UvrB monomer. DNA wrap is dependent on ATP binding by UvrB and probably causes local melting of the DNA helix, facilitating insertion of UvrB beta-hairpin between the DNA strands. Then UvrB probes one DNA strand for the presence of a lesion. If a lesion is found the UvrA subunits dissociate and the UvrB-DNA preincision complex is formed. This complex is subsequently bound by UvrC and the second UvrB is released. If no lesion is found, the DNA wraps around the other UvrB subunit that will check the other stand for damage. The chain is UvrABC system protein B from Lactiplantibacillus plantarum (strain ATCC BAA-793 / NCIMB 8826 / WCFS1) (Lactobacillus plantarum).